A 1132-amino-acid polypeptide reads, in one-letter code: Phytochrome B (1132 aa).

Residues 1 to 11 (MASGSRTKHSH) are compositionally biased toward basic residues. The interval 1 to 27 (MASGSRTKHSHQSGQGQVQAQSSGTSN) is disordered. The span at 12–26 (QSGQGQVQAQSSGTS) shows a compositional bias: low complexity. In terms of domain architecture, GAF spans 231–409 (DVKLLCDTVV…AFGLQLNMEL (179 aa)). C336 is a binding site for phytochromobilin. PAS domains follow at residues 623–694 (VARE…LRGE) and 757–828 (DYKA…MIVL). One can recognise a Histidine kinase domain in the interval 905-1125 (YLCQEIKSPL…LIILDLPMTR (221 aa)).

The protein belongs to the phytochrome family. As to quaternary structure, homodimer. Post-translationally, contains one covalently linked phytochromobilin chromophore.

In terms of biological role, regulatory photoreceptor which exists in two forms that are reversibly interconvertible by light: the Pr form that absorbs maximally in the red region of the spectrum and the Pfr form that absorbs maximally in the far-red region. Photoconversion of Pr to Pfr induces an array of morphogenic responses, whereas reconversion of Pfr to Pr cancels the induction of those responses. Pfr controls the expression of a number of nuclear genes including those encoding the small subunit of ribulose-bisphosphate carboxylase, chlorophyll A/B binding protein, protochlorophyllide reductase, rRNA, etc. It also controls the expression of its own gene(s) in a negative feedback fashion. This chain is Phytochrome B (PHYB), found in Nicotiana tabacum (Common tobacco).